Consider the following 219-residue polypeptide: PRELI domain-containing protein 1, mitochondrial (219 aa).

Residues 36–174 (TEDIVHREVT…ILAKLQGEAP (139 aa)) form the PRELI/MSF1 domain.

Forms a complex with TRIAP1 in the mitochondrion intermembrane space. Interacts with OPA1 and AIFM1. In terms of tissue distribution, highly expressed in fetal liver; less expressed in fetal brain, lung, and kidney. At the adult stage, expression is drastically reduced in the liver but highly expressed in the spleen, brain, lung, lymph nodes and peripheral blood leukocytes.

It localises to the mitochondrion. The protein resides in the mitochondrion intermembrane space. It carries out the reaction a 1,2-diacyl-sn-glycero-3-phosphate(in) = a 1,2-diacyl-sn-glycero-3-phosphate(out). Its function is as follows. Involved in the modulation of the mitochondrial apoptotic pathway by ensuring the accumulation of cardiolipin (CL) in mitochondrial membranes. In vitro, the TRIAP1:PRELID1 complex mediates the transfer of phosphatidic acid (PA) between liposomes and probably functions as a PA transporter across the mitochondrion intermembrane space to provide PA for CL synthesis in the inner membrane. Regulates the mitochondrial apoptotic pathway in primary Th cells. Regulates Th cell differentiation by down-regulating STAT6 thereby reducing IL-4-induced Th2 cell number. May be important for the development of vital and immunocompetent organs. This is PRELI domain-containing protein 1, mitochondrial (PRELID1) from Homo sapiens (Human).